The primary structure comprises 476 residues: C-terminal-binding protein (476 aa).

NAD(+) contacts are provided by residues serine 100, 180–185 (VGLGRI), aspartate 204, 237–243 (CTLNEHN), 264–266 (TAR), and aspartate 290. The active site involves arginine 266. Residue glutamate 295 is part of the active site. Histidine 315 acts as the Proton donor in catalysis. Position 315–318 (315–318 (HAAF)) interacts with NAD(+). The interval 445–476 (VSSQSPLSAPDPNNHLSSSIKTEVKAESTEAP) is disordered. A compositionally biased stretch (basic and acidic residues) spans 466-476 (TEVKAESTEAP).

Belongs to the D-isomer specific 2-hydroxyacid dehydrogenase family. Homodimer. Interacts with hairy (hry), knirps (kni), snail (sna), and Enhancer of split m-delta (HLHm-delta). Complex may be involved in transcriptional repression. Also interacts with adenovirus E1A protein.

It localises to the nucleus. Functionally, corepressor targeting diverse transcription regulators. Hairy-interacting protein required for embryonic segmentation and hairy-mediated transcriptional repression. The chain is C-terminal-binding protein (CtBP) from Drosophila melanogaster (Fruit fly).